The following is an 86-amino-acid chain: Colicin-E9 immunity protein (86 aa).

Belongs to the colicins ColE2/ColE8/ColE9 and pyocins S1/S2 family.

In terms of biological role, this protein is able to protect a cell, which harbors the plasmid ColE9 encoding colicin E9, against colicin E9, it binds specifically to the DNase-type colicin and inhibits its bactericidal activity. In Escherichia coli, this protein is Colicin-E9 immunity protein (imm).